We begin with the raw amino-acid sequence, 237 residues long: Ribitol-5-phosphate cytidylyltransferase (237 aa).

CTP is bound by residues 7–10 (LAGG), 81–87 (GSDRNES), and Ser112.

This sequence belongs to the IspD/TarI cytidylyltransferase family. TarI subfamily.

It catalyses the reaction D-ribitol 5-phosphate + CTP + H(+) = CDP-L-ribitol + diphosphate. Its pathway is cell wall biogenesis; poly(ribitol phosphate) teichoic acid biosynthesis. In terms of biological role, catalyzes the transfer of the cytidylyl group of CTP to D-ribitol 5-phosphate. This chain is Ribitol-5-phosphate cytidylyltransferase, found in Bacillus spizizenii (strain ATCC 23059 / NRRL B-14472 / W23) (Bacillus subtilis subsp. spizizenii).